The primary structure comprises 428 residues: Adenylosuccinate synthetase (428 aa).

GTP is bound by residues 12 to 18 (GDEGKGK) and 40 to 42 (GHT). Aspartate 13 functions as the Proton acceptor in the catalytic mechanism. Residues aspartate 13 and glycine 40 each coordinate Mg(2+). IMP is bound by residues 13–16 (DEGK), 38–41 (NAGH), threonine 128, arginine 142, glutamine 223, threonine 238, and arginine 302. Histidine 41 acts as the Proton donor in catalysis. 298–304 (TTTGRPR) provides a ligand contact to substrate. GTP-binding positions include arginine 304, 330–332 (KLD), and 412–414 (SVG).

It belongs to the adenylosuccinate synthetase family. As to quaternary structure, homodimer. Mg(2+) is required as a cofactor.

The protein localises to the cytoplasm. It catalyses the reaction IMP + L-aspartate + GTP = N(6)-(1,2-dicarboxyethyl)-AMP + GDP + phosphate + 2 H(+). It participates in purine metabolism; AMP biosynthesis via de novo pathway; AMP from IMP: step 1/2. Plays an important role in the de novo pathway of purine nucleotide biosynthesis. Catalyzes the first committed step in the biosynthesis of AMP from IMP. This Desulforamulus reducens (strain ATCC BAA-1160 / DSM 100696 / MI-1) (Desulfotomaculum reducens) protein is Adenylosuccinate synthetase.